Reading from the N-terminus, the 62-residue chain is Large ribosomal subunit protein bL28 (62 aa).

Residues Met1–Arg27 form a disordered region. Residues Arg10–His20 are compositionally biased toward basic residues.

Belongs to the bacterial ribosomal protein bL28 family.

The protein is Large ribosomal subunit protein bL28 of Listeria innocua serovar 6a (strain ATCC BAA-680 / CLIP 11262).